The chain runs to 299 residues: Zinc import ATP-binding protein ZnuC (299 aa).

Residues 13–228 (VSLANAGVQR…PEYMRLFGGT (216 aa)) form the ABC transporter domain. ATP is bound at residue 45 to 52 (GPNGSGKS).

Belongs to the ABC transporter superfamily. Zinc importer (TC 3.A.1.15.5) family. In terms of assembly, the complex is composed of two ATP-binding proteins (ZnuC), two transmembrane proteins (ZnuB) and a solute-binding protein (ZnuA).

It localises to the cell inner membrane. The catalysed reaction is Zn(2+)(out) + ATP(in) + H2O(in) = Zn(2+)(in) + ADP(in) + phosphate(in) + H(+)(in). In terms of biological role, part of the ABC transporter complex ZnuABC involved in zinc import. Responsible for energy coupling to the transport system. This is Zinc import ATP-binding protein ZnuC from Agrobacterium fabrum (strain C58 / ATCC 33970) (Agrobacterium tumefaciens (strain C58)).